The chain runs to 344 residues: L-rhamnose-proton symporter (344 aa).

The next 10 helical transmembrane spans lie at Ala-4 to Ala-24, Trp-38 to Leu-58, Phe-68 to Ile-88, Met-101 to Ile-121, Thr-137 to Leu-157, Leu-175 to Ala-195, Leu-214 to Ile-234, Ile-259 to Gly-279, Met-290 to Leu-310, and Val-321 to Gly-341.

It belongs to the L-rhamnose transporter (TC 2.A.7.6) family.

The protein resides in the cell inner membrane. The catalysed reaction is L-rhamnopyranose(in) + H(+)(in) = L-rhamnopyranose(out) + H(+)(out). In terms of biological role, uptake of L-rhamnose across the cytoplasmic membrane with the concomitant transport of protons into the cell (symport system). The chain is L-rhamnose-proton symporter from Salmonella dublin (strain CT_02021853).